The following is a 449-amino-acid chain: Myb-related protein Pp1 (449 aa).

One can recognise an HTH myb-type domain in the interval 1 to 30 (LGNRWSAIAIPRRTDNEIKNYWNTHLKKRL). A DNA-binding region (H-T-H motif) is located at residues 5–26 (WSAIAIPRRTDNEIKNYWNTHL).

The protein localises to the nucleus. In terms of biological role, possible transcription activator. The sequence is that of Myb-related protein Pp1 (PP1) from Physcomitrium patens (Spreading-leaved earth moss).